The chain runs to 476 residues: Glutamate--tRNA ligase (476 aa).

The 'HIGH' region motif lies at 9 to 19; sequence PSPTGTLHIGT. Positions 248-252 match the 'KMSKS' region motif; it reads KLSKR. Lys-251 contacts ATP.

It belongs to the class-I aminoacyl-tRNA synthetase family. Glutamate--tRNA ligase type 1 subfamily. In terms of assembly, monomer.

It localises to the cytoplasm. It carries out the reaction tRNA(Glu) + L-glutamate + ATP = L-glutamyl-tRNA(Glu) + AMP + diphosphate. Catalyzes the attachment of glutamate to tRNA(Glu) in a two-step reaction: glutamate is first activated by ATP to form Glu-AMP and then transferred to the acceptor end of tRNA(Glu). The polypeptide is Glutamate--tRNA ligase (Prochlorococcus marinus (strain MIT 9313)).